Consider the following 84-residue polypeptide: CDC42 small effector protein 2 (84 aa).

Residues Cys10 and Cys11 are each lipidated (S-palmitoyl cysteine). Positions 29–42 (IGEPTNFVHTAHVG) constitute a CRIB domain. 2 positions are modified to phosphoserine: Ser43 and Ser52.

This sequence belongs to the CDC42SE/SPEC family. As to quaternary structure, interacts with CDC42 (in GTP-bound form). Interacts weakly with RAC1 and not at all with RHOA. As to expression, widely expressed. Expressed at higher level in T-lymphocytes. Highly expressed in CCRF-CEM T-lymphocytes, Jurkat T-lymphocytes, and Raji B-lymphocytes compared (at protein level).

The protein localises to the cytoplasm. The protein resides in the cytoskeleton. Its subcellular location is the cell membrane. It localises to the cell projection. It is found in the phagocytic cup. Probably involved in the organization of the actin cytoskeleton by acting downstream of CDC42, inducing actin filament assembly. Alters CDC42-induced cell shape changes. In activated T-cells, may play a role in CDC42-mediated F-actin accumulation at the immunological synapse. May play a role in early contractile events in phagocytosis in macrophages. The sequence is that of CDC42 small effector protein 2 (CDC42SE2) from Homo sapiens (Human).